Reading from the N-terminus, the 54-residue chain is Rubredoxin (54 aa).

A Rubredoxin-like domain is found at 1–54 (MKKYVCVVCGYIYDPAEGDPDNGVNPGTSFEDIPDDWVCPLCGVGKDQFEPSEE). Positions 6, 9, 39, and 42 each coordinate Fe cation.

It belongs to the rubredoxin family. Fe(3+) serves as cofactor.

Functionally, rubredoxin is a small nonheme, iron protein lacking acid-labile sulfide. Its single Fe, chelated to 4 Cys, functions as an electron acceptor and may also stabilize the conformation of the molecule. Functions as an intermediate component in the electron transfer chain: NADH-&gt;NROR-&gt;Rd-&gt;FprA1/2 in which Rd serves as the proximal electron donor to the FDPs that exhibit H(2)O-forming NADH oxidase activity. Also functions as the proximal electron donor to the Dfx and revRbr proteins that display superoxide reductase (SOR) and NADH peroxidase activity, respectively. Therefore, is a key electron carrier in an efficient multienzyme complex that can scavenge O(2) and reactive oxygen species (ROS), and thus plays an important role in the oxidative stress defense system in C.acetobutylicum, an obligate anaerobic bacterium. This Clostridium acetobutylicum (strain ATCC 824 / DSM 792 / JCM 1419 / IAM 19013 / LMG 5710 / NBRC 13948 / NRRL B-527 / VKM B-1787 / 2291 / W) protein is Rubredoxin (rd).